Here is a 138-residue protein sequence, read N- to C-terminus: Ribulose bisphosphate carboxylase small subunit (138 aa).

This sequence belongs to the RuBisCO small chain family. In terms of assembly, heterohexadecamer of 8 large and 8 small subunits.

Its subcellular location is the plastid. The protein resides in the chloroplast. Its function is as follows. RuBisCO catalyzes two reactions: the carboxylation of D-ribulose 1,5-bisphosphate, the primary event in carbon dioxide fixation, as well as the oxidative fragmentation of the pentose substrate in the photorespiration process. Both reactions occur simultaneously and in competition at the same active site. Although the small subunit is not catalytic it is essential for maximal activity. The polypeptide is Ribulose bisphosphate carboxylase small subunit (Cyanidium caldarium (Red alga)).